A 458-amino-acid chain; its full sequence is NADH-quinone oxidoreductase subunit N (458 aa).

Transmembrane regions (helical) follow at residues 2–22 (LLLL…FFAV), 30–50 (IISN…FKYS), 62–82 (GINI…SMII), 94–114 (LKFE…VAIS), 118–138 (FLLL…LAGF), 153–173 (FILG…IYGF), 194–214 (LGLI…LSSV), 235–255 (FNAA…KLII), 261–281 (INYN…AFGA), 290–310 (LMAY…LLHN), 318–338 (LLYM…LIIL), 361–381 (IAAV…LTGF), 397–417 (FALA…YLKV), and 438–458 (LLLI…IISF).

It belongs to the complex I subunit 2 family. In terms of assembly, NDH-1 is composed of 14 different subunits. Subunits NuoA, H, J, K, L, M, N constitute the membrane sector of the complex.

The protein localises to the cell inner membrane. The enzyme catalyses a quinone + NADH + 5 H(+)(in) = a quinol + NAD(+) + 4 H(+)(out). Functionally, NDH-1 shuttles electrons from NADH, via FMN and iron-sulfur (Fe-S) centers, to quinones in the respiratory chain. The immediate electron acceptor for the enzyme in this species is believed to be ubiquinone. Couples the redox reaction to proton translocation (for every two electrons transferred, four hydrogen ions are translocated across the cytoplasmic membrane), and thus conserves the redox energy in a proton gradient. This is NADH-quinone oxidoreductase subunit N from Rickettsia conorii (strain ATCC VR-613 / Malish 7).